The chain runs to 959 residues: Glutamate receptor 3.4 (959 aa).

The N-terminal stretch at 1 to 35 (MGFLVMIREVSMAKAIRVVLLCVSVLWVVPKECAC) is a signal peptide. Residues 36–613 (RSNFSRNSSS…SPWSFLKPFT (578 aa)) are Extracellular-facing. N-linked (GlcNAc...) asparagine glycans are attached at residues Asn38, Asn42, Asn108, Asn365, Asn378, Asn404, Asn443, Asn461, and Asn576. The helical transmembrane segment at 614-634 (IEMWAVTGGFFLFVGAMVWIL) threads the bilayer. The Cytoplasmic segment spans residues 635–643 (EHRFNQEFR). A helical membrane pass occupies residues 644-664 (GPPRRQLITIFWFSFSTMFFS). Over 665 to 675 (HRENTVSSLGR) the chain is Cytoplasmic. A helical membrane pass occupies residues 676–696 (FVLIIWLFVVLIINSSYTASL). Over 697–857 (TSILTIRQLT…SEDSQLSLKS (161 aa)) the chain is Extracellular. A helical membrane pass occupies residues 858–878 (FWGLFLICGITCFMALTVFFW). Residues 879–959 (RVFWQYQRLL…TSQSQHGEIT (81 aa)) are Cytoplasmic-facing. Disordered stretches follow at residues 893-913 (DEER…SRAP) and 936-959 (KSSK…GEIT). Over residues 943 to 959 (STQSAAGTSQSQHGEIT) the composition is skewed to low complexity.

It belongs to the glutamate-gated ion channel (TC 1.A.10.1) family. Forms a heteromeric channel with GLR3.2. As to expression, highly expressed in roots and at lower levels in leaves and siliques. Expressed in seedlings, cotyledons, roots (e.g. root hairs, epidermis and cortex cells), stems, leaves (e.g. vascular bundles and hydathodes), and siliques. Expressed in root phloem.

It localises to the cell membrane. It is found in the plastid. The protein resides in the chloroplast membrane. Glutamate-gated receptor that probably acts as a non-selective cation channel, at least in hypocotyls. Can be triggered by Asn, Ser, Gly and, to a lower extent, Ala, Cys and Glu. May be involved in light-signal transduction and calcium homeostasis via the regulation of calcium influx into cells. Plays an important role in the calcium-based fast transmission of environmental stress. Acts as a negative regulator of lateral root initiation and development. May restrict primordia numbers and position along the root axis by a signaling process originating in the phloem. AtGLR3.4-mediated cytosolic calcium influx may be involved in the regulation of seed germination under salt stress by modulating sodium accumulation through the SOS pathway. The polypeptide is Glutamate receptor 3.4 (Arabidopsis thaliana (Mouse-ear cress)).